The following is a 364-amino-acid chain: DNA replication and repair protein RecF (364 aa).

An ATP-binding site is contributed by 30-37 (GLNAQGKS).

It belongs to the RecF family.

The protein localises to the cytoplasm. Its function is as follows. The RecF protein is involved in DNA metabolism; it is required for DNA replication and normal SOS inducibility. RecF binds preferentially to single-stranded, linear DNA. It also seems to bind ATP. This is DNA replication and repair protein RecF from Caldanaerobacter subterraneus subsp. tengcongensis (strain DSM 15242 / JCM 11007 / NBRC 100824 / MB4) (Thermoanaerobacter tengcongensis).